Consider the following 250-residue polypeptide: 3-deoxy-manno-octulosonate cytidylyltransferase (250 aa).

This sequence belongs to the KdsB family.

The protein localises to the cytoplasm. The enzyme catalyses 3-deoxy-alpha-D-manno-oct-2-ulosonate + CTP = CMP-3-deoxy-beta-D-manno-octulosonate + diphosphate. It participates in nucleotide-sugar biosynthesis; CMP-3-deoxy-D-manno-octulosonate biosynthesis; CMP-3-deoxy-D-manno-octulosonate from 3-deoxy-D-manno-octulosonate and CTP: step 1/1. It functions in the pathway bacterial outer membrane biogenesis; lipopolysaccharide biosynthesis. Activates KDO (a required 8-carbon sugar) for incorporation into bacterial lipopolysaccharide in Gram-negative bacteria. The protein is 3-deoxy-manno-octulosonate cytidylyltransferase of Xanthomonas campestris pv. campestris (strain 8004).